Consider the following 289-residue polypeptide: Mas-related G-protein coupled receptor member G (289 aa).

The Extracellular portion of the chain corresponds to 1–13 (MLSIFNIWGTFNR). The helical transmembrane segment at 14 to 34 (VLFFLSLTVSLAGLAGNTLLL) threads the bilayer. The Cytoplasmic portion of the chain corresponds to 35-49 (WHLGLRIKKGPFNTY). A helical transmembrane segment spans residues 50–70 (LLHLAAADFLFLSCQVGFSIA). The Extracellular portion of the chain corresponds to 71–80 (KIASGYEDTL). The chain crosses the membrane as a helical span at residues 81-101 (YFPVTFLWFAVGLWLLAAFIV). Residues 102–123 (DCCLSYMFPSFCGPNCRPRYTS) lie on the Cytoplasmic side of the membrane. The helical transmembrane segment at 124–144 (FVLCLVIWALTMLAVLLPANA) threads the bilayer. The Extracellular segment spans residues 145-164 (CGLLYNRMSLLVCLKYHWVS). The helical transmembrane segment at 165 to 185 (VVWLGVLASTACGASMFLLVF) threads the bilayer. Residues 186-200 (GNCCSSQPPSKFCKL) lie on the Cytoplasmic side of the membrane. Residues 201–221 (AQCSGILLFFCRLPLVFYWCL) form a helical membrane-spanning segment. A topological domain (extracellular) is located at residue R222. Residues 223–243 (PVIKFLLPFFFPLATLLACID) traverse the membrane as a helical segment. At 244-289 (SSAKPLLYYLKGRQLRKEPLQVALNRALGEESQSSSGGISLPMSRV) the chain is on the cytoplasmic side.

It belongs to the G-protein coupled receptor 1 family. Mas subfamily.

It is found in the cell membrane. Its function is as follows. Orphan receptor. May regulate nociceptor function and/or development, including the sensation or modulation of pain. The chain is Mas-related G-protein coupled receptor member G (Mrgprg) from Rattus norvegicus (Rat).